Here is a 547-residue protein sequence, read N- to C-terminus: Isoflavonoid 7-O-beta-apiosyl-glucoside beta-glycosidase (547 aa).

Positions methionine 1 to arginine 31 are cleaved as a signal peptide. Glutamine 59 is a binding site for a beta-D-glucoside. N-linked (GlcNAc...) asparagine glycosylation is found at asparagine 72 and asparagine 132. Histidine 159 provides a ligand contact to a beta-D-glucoside. A glycan (N-linked (GlcNAc...) asparagine) is linked at asparagine 175. An a beta-D-glucoside-binding site is contributed by asparagine 204–glutamate 205. Glutamate 205 functions as the Proton donor in the catalytic mechanism. Cysteine 224 and cysteine 232 are joined by a disulfide. N-linked (GlcNAc...) asparagine glycosylation is present at asparagine 285. Residues tyrosine 348, glutamate 419, tryptophan 468, glutamate 475–tryptophan 476, and phenylalanine 484 contribute to the a beta-D-glucoside site. Glutamate 419 (nucleophile) is an active-site residue. The N-linked (GlcNAc...) asparagine glycan is linked to asparagine 490.

This sequence belongs to the glycosyl hydrolase 1 family. As to quaternary structure, homotetramer.

The catalysed reaction is 7-[beta-D-apiofuranosyl-(1-&gt;6)-beta-D-glucopyranosyloxy]isoflavonoid + H2O = a 7-hydroxyisoflavonoid + beta-D-apiofuranosyl-(1-&gt;6)-D-glucose.. With respect to regulation, not inhibited by iron, calcium, mercury, manganese, zinc or EDTA. Its function is as follows. Hydrolyzes dalpatein 7-O-beta-D-apiofuranosyl-(1-&gt;6)-beta-D-glucopyranoside and dalnigrein 7-O-beta-D-apiofuranosyl-(1-&gt;6)-beta-D-glucopyranoside. Also has activity towards pNP-beta-D-fucoside and pNP-beta-D-glucoside, but not pNP-beta-cellobioside. The chain is Isoflavonoid 7-O-beta-apiosyl-glucoside beta-glycosidase from Dalbergia nigrescens (Thai blackwood).